Consider the following 103-residue polypeptide: NADH-quinone oxidoreductase subunit K (103 aa).

The next 3 helical transmembrane spans lie at 4 to 24, 28 to 48, and 64 to 84; these read LTSY…GVIA, IFVI…FLIT, and MVIS…ILLF.

It belongs to the complex I subunit 4L family. In terms of assembly, NDH-1 is composed of 14 different subunits. Subunits NuoA, H, J, K, L, M, N constitute the membrane sector of the complex.

The protein localises to the cell inner membrane. The catalysed reaction is a quinone + NADH + 5 H(+)(in) = a quinol + NAD(+) + 4 H(+)(out). Its function is as follows. NDH-1 shuttles electrons from NADH, via FMN and iron-sulfur (Fe-S) centers, to quinones in the respiratory chain. The immediate electron acceptor for the enzyme in this species is believed to be ubiquinone. Couples the redox reaction to proton translocation (for every two electrons transferred, four hydrogen ions are translocated across the cytoplasmic membrane), and thus conserves the redox energy in a proton gradient. In Aliarcobacter butzleri (strain RM4018) (Arcobacter butzleri), this protein is NADH-quinone oxidoreductase subunit K.